The primary structure comprises 411 residues: ATPase family AAA domain-containing protein 3C (411 aa).

An ATP-binding site is contributed by 177–184; sequence GPPGTGKT.

It belongs to the AAA ATPase family.

The sequence is that of ATPase family AAA domain-containing protein 3C (ATAD3C) from Homo sapiens (Human).